The following is a 457-amino-acid chain: UDP-N-acetylmuramoylalanine--D-glutamate ligase (457 aa).

Gly-116–Thr-122 serves as a coordination point for ATP.

Belongs to the MurCDEF family.

It localises to the cytoplasm. The catalysed reaction is UDP-N-acetyl-alpha-D-muramoyl-L-alanine + D-glutamate + ATP = UDP-N-acetyl-alpha-D-muramoyl-L-alanyl-D-glutamate + ADP + phosphate + H(+). It participates in cell wall biogenesis; peptidoglycan biosynthesis. In terms of biological role, cell wall formation. Catalyzes the addition of glutamate to the nucleotide precursor UDP-N-acetylmuramoyl-L-alanine (UMA). The polypeptide is UDP-N-acetylmuramoylalanine--D-glutamate ligase (Caldicellulosiruptor bescii (strain ATCC BAA-1888 / DSM 6725 / KCTC 15123 / Z-1320) (Anaerocellum thermophilum)).